The chain runs to 285 residues: MDDSLRVSVLSEALPYIQRFAGRRIVVKYGGAAMVHAELRDAVFRDIALLASVGVQPVVVHGGGPEINTWLKRLDIRSEFRDGLRVTDAETMDVVEMVLVGRVNKQIVNGLNRLGASAVGLSGSDGRLVEARPWGDGNHGLVGDVARVNPDVLEPLLARGYVPVISSVAANPEGESHNINADTVAGELAAALEAEKLILLTDTQGILRDRDNPNSLIRQLRLSEARQLIHDGVVAGGMTPKTECCIRALAQGVAAAHIVDGRVPHALLLEVFTDAGIGTMVLGCG.

Residues G63–G64, R85, and N178 each bind substrate.

The protein belongs to the acetylglutamate kinase family. ArgB subfamily.

The protein localises to the cytoplasm. It catalyses the reaction N-acetyl-L-glutamate + ATP = N-acetyl-L-glutamyl 5-phosphate + ADP. It participates in amino-acid biosynthesis; L-arginine biosynthesis; N(2)-acetyl-L-ornithine from L-glutamate: step 2/4. Catalyzes the ATP-dependent phosphorylation of N-acetyl-L-glutamate. This is Acetylglutamate kinase from Synechococcus sp. (strain CC9311).